The sequence spans 503 residues: D-alanine--D-alanyl carrier protein ligase (503 aa).

151–152 (TS) is a binding site for ATP. Aspartate 196 contacts D-alanine. Residue 291–296 (NTYGPT) coordinates ATP. Valine 300 is a binding site for D-alanine. Residues aspartate 382, 393 to 396 (YNGR), and lysine 491 contribute to the ATP site. Lysine 491 provides a ligand contact to D-alanine.

This sequence belongs to the ATP-dependent AMP-binding enzyme family. DltA subfamily.

The protein resides in the cytoplasm. The enzyme catalyses holo-[D-alanyl-carrier protein] + D-alanine + ATP = D-alanyl-[D-alanyl-carrier protein] + AMP + diphosphate. Its pathway is cell wall biogenesis; lipoteichoic acid biosynthesis. Functionally, catalyzes the first step in the D-alanylation of lipoteichoic acid (LTA), the activation of D-alanine and its transfer onto the D-alanyl carrier protein (Dcp) DltC. In an ATP-dependent two-step reaction, forms a high energy D-alanyl-AMP intermediate, followed by transfer of the D-alanyl residue as a thiol ester to the phosphopantheinyl prosthetic group of the Dcp. D-alanylation of LTA plays an important role in modulating the properties of the cell wall in Gram-positive bacteria, influencing the net charge of the cell wall. The protein is D-alanine--D-alanyl carrier protein ligase of Bacillus anthracis (strain A0248).